A 477-amino-acid polypeptide reads, in one-letter code: Endogenous retrovirus group V member 1 Env polyprotein (477 aa).

A signal peptide spans 1 to 21 (MTEKFLFLYLSLLPMPLLSQA). Residues 22–321 (QWNENSLVSF…NTTQPRQKRA (300 aa)) lie on the Extracellular side of the membrane. A glycan (N-linked (GlcNAc...) asparagine) is linked at N68. The helical transmembrane segment at 322–342 (LGLILAGMGAAIGMIAPWGGF) threads the bilayer. Residues 343-477 (TYHDVTLRNL…LLSPLWPLSL (135 aa)) lie on the Cytoplasmic side of the membrane.

It belongs to the gamma type-C retroviral envelope protein family. Expressed in placenta.

It is found in the membrane. The sequence is that of Endogenous retrovirus group V member 1 Env polyprotein (ERVV-1) from Homo sapiens (Human).